We begin with the raw amino-acid sequence, 499 residues long: Maturase K (499 aa).

The protein belongs to the intron maturase 2 family. MatK subfamily.

It is found in the plastid. It localises to the chloroplast. Functionally, usually encoded in the trnK tRNA gene intron. Probably assists in splicing its own and other chloroplast group II introns. The protein is Maturase K of Gleditsia triacanthos (Common honey-locust).